A 242-amino-acid chain; its full sequence is Venom nerve growth factor 1 (242 aa).

Residues 1–18 (MSMLCYTLIIAFLIGIWA) form the signal peptide. Positions 19–125 (APKSEDNVPL…ALNRNIRSKR (107 aa)) are excised as a propeptide. Residues 26-69 (VPLGSPATSDLSDTSCAQTHKALKTSRNTDQRHPAPKKAEDQEL) form a disordered region. The span at 31–43 (PATSDLSDTSCAQ) shows a compositional bias: polar residues. Residues 52 to 66 (RNTDQRHPAPKKAED) show a composition bias toward basic and acidic residues. Cystine bridges form between cysteine 139–cysteine 203, cysteine 181–cysteine 231, and cysteine 191–cysteine 233. Asparagine 147 carries N-linked (GlcNAc...) asparagine glycosylation.

The protein belongs to the NGF-beta family. In terms of assembly, homodimer; non-covalently linked. As to expression, expressed by the venom gland.

Its subcellular location is the secreted. Nerve growth factor is important for the development and maintenance of the sympathetic and sensory nervous systems. It stimulates division and differentiation of sympathetic and embryonic sensory neurons as well as basal forebrain cholinergic neurons in the brain. Its relevance in the snake venom is not clear. However, it has been shown to inhibit metalloproteinase-dependent proteolysis of platelet glycoprotein Ib alpha, suggesting a metalloproteinase inhibition to prevent metalloprotease autodigestion and/or protection against prey proteases. Binds a lipid between the two protein chains in the homodimer. The lipid-bound form promotes histamine relase from mouse mast cells, contrary to the lipid-free form. The polypeptide is Venom nerve growth factor 1 (Demansia vestigiata (Lesser black whip snake)).